The sequence spans 353 residues: RNA 3'-terminal phosphate cyclase (353 aa).

Residues Q100 and H285–Q289 each bind ATP. The active-site Tele-AMP-histidine intermediate is H311.

It belongs to the RNA 3'-terminal cyclase family. Type 1 subfamily.

It localises to the cytoplasm. The enzyme catalyses a 3'-end 3'-phospho-ribonucleotide-RNA + ATP = a 3'-end 2',3'-cyclophospho-ribonucleotide-RNA + AMP + diphosphate. Its function is as follows. Catalyzes the conversion of 3'-phosphate to a 2',3'-cyclic phosphodiester at the end of RNA. The mechanism of action of the enzyme occurs in 3 steps: (A) adenylation of the enzyme by ATP; (B) transfer of adenylate to an RNA-N3'P to produce RNA-N3'PP5'A; (C) and attack of the adjacent 2'-hydroxyl on the 3'-phosphorus in the diester linkage to produce the cyclic end product. The biological role of this enzyme is unknown but it is likely to function in some aspects of cellular RNA processing. The polypeptide is RNA 3'-terminal phosphate cyclase (Nitrosospira multiformis (strain ATCC 25196 / NCIMB 11849 / C 71)).